The chain runs to 200 residues: Small ribosomal subunit protein uS4 (200 aa).

Residues Thr22 to Arg41 are disordered. The 61-residue stretch at Ser92–Lys152 folds into the S4 RNA-binding domain.

This sequence belongs to the universal ribosomal protein uS4 family. Part of the 30S ribosomal subunit. Contacts protein S5. The interaction surface between S4 and S5 is involved in control of translational fidelity.

Its function is as follows. One of the primary rRNA binding proteins, it binds directly to 16S rRNA where it nucleates assembly of the body of the 30S subunit. Functionally, with S5 and S12 plays an important role in translational accuracy. This chain is Small ribosomal subunit protein uS4, found in Halalkalibacterium halodurans (strain ATCC BAA-125 / DSM 18197 / FERM 7344 / JCM 9153 / C-125) (Bacillus halodurans).